Reading from the N-terminus, the 278-residue chain is Large ribosomal subunit protein uL2 (278 aa).

The tract at residues 225–278 is disordered; it reads MNPVDHPHGGGEGRTSGGRHPVTPWGKPTKGKKTRANKATDKYIVRSRHQKKKG. The span at 269–278 shows a compositional bias: basic residues; sequence VRSRHQKKKG.

This sequence belongs to the universal ribosomal protein uL2 family. In terms of assembly, part of the 50S ribosomal subunit. Forms a bridge to the 30S subunit in the 70S ribosome.

One of the primary rRNA binding proteins. Required for association of the 30S and 50S subunits to form the 70S ribosome, for tRNA binding and peptide bond formation. It has been suggested to have peptidyltransferase activity; this is somewhat controversial. Makes several contacts with the 16S rRNA in the 70S ribosome. The protein is Large ribosomal subunit protein uL2 of Parvibaculum lavamentivorans (strain DS-1 / DSM 13023 / NCIMB 13966).